A 1234-amino-acid chain; its full sequence is Transcription-repair-coupling factor (1234 aa).

A Helicase ATP-binding domain is found at 663 to 824; sequence DMEKPIPMDR…LAGIREMSTI (162 aa). 676 to 683 is a binding site for ATP; sequence GDVGYGKT. The short motif at 777–780 is the DEEQ box element; it reads DEEQ. The Helicase C-terminal domain occupies 842–999; that stretch reads DDKQIAAALR…GMAVALKDLE (158 aa). The interval 1207–1234 is disordered; sequence RQHIGITNPSPPGEDGRGRNTTIKERQP. A compositionally biased stretch (basic and acidic residues) spans 1220–1234; the sequence is EDGRGRNTTIKERQP.

In the N-terminal section; belongs to the UvrB family. It in the C-terminal section; belongs to the helicase family. RecG subfamily.

It localises to the cytoplasm. Functionally, couples transcription and DNA repair by recognizing RNA polymerase (RNAP) stalled at DNA lesions. Mediates ATP-dependent release of RNAP and its truncated transcript from the DNA, and recruitment of nucleotide excision repair machinery to the damaged site. In Mycobacterium bovis (strain ATCC BAA-935 / AF2122/97), this protein is Transcription-repair-coupling factor.